Reading from the N-terminus, the 353-residue chain is Terpene synthase 3 (353 aa).

Mg(2+) contacts are provided by Asp-118, Asn-261, and Glu-269. The short motif at Asp-118–Glu-122 is the D(D/E)XX(D/E) motif element. The NSE motif motif lies at Asn-261–Glu-269. Positions Trp-342 to Tyr-349 match the WxxxxxRY motif motif.

It belongs to the terpene synthase family. Mg(2+) serves as cofactor.

Functionally, terpene synthase that may be involved in the production of volatile terpenoids. Does not show detectable terpene products with either farnesyl diphosphate (FPP) or geranyl diphosphate (GPP). P.polycephalum has a unique biology and these volatile terpenoids could function in internal communication of P.polycephalum, to mark the territory that have been explored, or they may be involved in chemotaxis. The sequence is that of Terpene synthase 3 from Physarum polycephalum (Slime mold).